Reading from the N-terminus, the 384-residue chain is S-adenosylmethionine synthase (384 aa).

Histidine 15 provides a ligand contact to ATP. Aspartate 17 contacts Mg(2+). Glutamate 43 is a binding site for K(+). 2 residues coordinate L-methionine: glutamate 56 and glutamine 99. The interval 99 to 109 (QSPDINQGVDR) is flexible loop. ATP contacts are provided by residues 164-166 (DAK), 230-231 (RF), aspartate 239, 245-246 (RK), alanine 262, and lysine 266. Aspartate 239 provides a ligand contact to L-methionine. L-methionine is bound at residue lysine 270.

This sequence belongs to the AdoMet synthase family. As to quaternary structure, homotetramer; dimer of dimers. The cofactor is Mg(2+). It depends on K(+) as a cofactor.

Its subcellular location is the cytoplasm. The enzyme catalyses L-methionine + ATP + H2O = S-adenosyl-L-methionine + phosphate + diphosphate. It participates in amino-acid biosynthesis; S-adenosyl-L-methionine biosynthesis; S-adenosyl-L-methionine from L-methionine: step 1/1. In terms of biological role, catalyzes the formation of S-adenosylmethionine (AdoMet) from methionine and ATP. The overall synthetic reaction is composed of two sequential steps, AdoMet formation and the subsequent tripolyphosphate hydrolysis which occurs prior to release of AdoMet from the enzyme. This is S-adenosylmethionine synthase from Edwardsiella ictaluri (strain 93-146).